Here is a 210-residue protein sequence, read N- to C-terminus: Somatotropin-2 (210 aa).

The signal sequence occupies residues 1–22; the sequence is MARALVLLSVVLVSLLVNQGRA. Histidine 38 is a binding site for Zn(2+). Cysteine 71 and cysteine 183 form a disulfide bridge. Glutamate 192 provides a ligand contact to Zn(2+). A disulfide bridge connects residues cysteine 200 and cysteine 208.

This sequence belongs to the somatotropin/prolactin family.

The protein localises to the secreted. Growth hormone plays an important role in growth control and is involved in the regulation of several anabolic processes. Implicated as an osmoregulatory substance important for seawater adaptation. The chain is Somatotropin-2 (gh2) from Carassius auratus (Goldfish).